The sequence spans 156 residues: 6,7-dimethyl-8-ribityllumazine synthase (156 aa).

Residues Phe22, 56–58 (AME), and 80–82 (AVI) each bind 5-amino-6-(D-ribitylamino)uracil. 85–86 (ET) is a binding site for (2S)-2-hydroxy-3-oxobutyl phosphate. His88 functions as the Proton donor in the catalytic mechanism. Phe113 contacts 5-amino-6-(D-ribitylamino)uracil. Arg127 contacts (2S)-2-hydroxy-3-oxobutyl phosphate.

Belongs to the DMRL synthase family.

It carries out the reaction (2S)-2-hydroxy-3-oxobutyl phosphate + 5-amino-6-(D-ribitylamino)uracil = 6,7-dimethyl-8-(1-D-ribityl)lumazine + phosphate + 2 H2O + H(+). It participates in cofactor biosynthesis; riboflavin biosynthesis; riboflavin from 2-hydroxy-3-oxobutyl phosphate and 5-amino-6-(D-ribitylamino)uracil: step 1/2. Catalyzes the formation of 6,7-dimethyl-8-ribityllumazine by condensation of 5-amino-6-(D-ribitylamino)uracil with 3,4-dihydroxy-2-butanone 4-phosphate. This is the penultimate step in the biosynthesis of riboflavin. The sequence is that of 6,7-dimethyl-8-ribityllumazine synthase from Kosmotoga olearia (strain ATCC BAA-1733 / DSM 21960 / TBF 19.5.1).